A 150-amino-acid chain; its full sequence is Small ribosomal subunit protein uS11z (150 aa).

Serine 19 is subject to Phosphoserine.

This sequence belongs to the universal ribosomal protein uS11 family. Interacts with AAK6.

The protein resides in the cytoplasm. This is Small ribosomal subunit protein uS11z (RPS14A) from Arabidopsis thaliana (Mouse-ear cress).